The sequence spans 1212 residues: DNA-directed RNA polymerase subunit beta'' (1212 aa).

Residues Cys229, Cys302, Cys309, and Cys312 each contribute to the Zn(2+) site. The disordered stretch occupies residues 1162–1212 (QKETSKNKKETSKNKKETSKNKKETSKNKKETSKNKKETSKNKKEASKNKK).

The protein belongs to the RNA polymerase beta' chain family. RpoC2 subfamily. In plastids the minimal PEP RNA polymerase catalytic core is composed of four subunits: alpha, beta, beta', and beta''. When a (nuclear-encoded) sigma factor is associated with the core the holoenzyme is formed, which can initiate transcription. Zn(2+) serves as cofactor.

It localises to the plastid. The protein resides in the chloroplast. It carries out the reaction RNA(n) + a ribonucleoside 5'-triphosphate = RNA(n+1) + diphosphate. Functionally, DNA-dependent RNA polymerase catalyzes the transcription of DNA into RNA using the four ribonucleoside triphosphates as substrates. The protein is DNA-directed RNA polymerase subunit beta'' of Cryptomeria japonica (Japanese cedar).